The following is a 439-amino-acid chain: Cell division protein FtsA (439 aa).

The protein belongs to the FtsA/MreB family. In terms of assembly, self-interacts. Interacts with FtsZ.

The protein localises to the cell inner membrane. Functionally, cell division protein that is involved in the assembly of the Z ring. May serve as a membrane anchor for the Z ring. The polypeptide is Cell division protein FtsA (Shigella flexneri).